A 70-amino-acid chain; its full sequence is Kappa-conotoxin-like Sx11.2 (70 aa).

A signal peptide spans methionine 1 to alanine 26. 4 disulfides stabilise this stretch: cysteine 27/cysteine 41, cysteine 34/cysteine 46, cysteine 40/cysteine 50, and cysteine 45/cysteine 54. 3 positions are modified to 4-carboxyglutamate: glutamate 30, glutamate 35, and glutamate 44. Proline 53 bears the 4-hydroxyproline mark. Proline 57 carries the post-translational modification Proline amide. Residues serine 61 to arginine 70 constitute a propeptide that is removed on maturation.

The protein belongs to the conotoxin I2 superfamily. Expressed by the venom duct.

It is found in the secreted. Functionally, modulator of potassium channels, specifically up-modulates the calcium and voltage-gated BK channels, has no effect on single channel conductance, but increases the open probability of BK channels. The sequence is that of Kappa-conotoxin-like Sx11.2 from Conus striolatus (Cone snail).